We begin with the raw amino-acid sequence, 200 residues long: Recombination protein RecR (200 aa).

Residues 57–72 (CRQCRTLTEQELCPQC) form a C4-type zinc finger. Residues 80–175 (TQLCVVEGPV…TATRIAHGVP (96 aa)) form the Toprim domain.

It belongs to the RecR family.

Its function is as follows. May play a role in DNA repair. It seems to be involved in an RecBC-independent recombinational process of DNA repair. It may act with RecF and RecO. The protein is Recombination protein RecR of Pseudomonas entomophila (strain L48).